A 207-amino-acid polypeptide reads, in one-letter code: Ribosomal RNA large subunit methyltransferase E (207 aa).

The S-adenosyl-L-methionine site is built by Gly-60, Trp-62, Asp-80, Asp-96, and Asp-121. The Proton acceptor role is filled by Lys-161.

It belongs to the class I-like SAM-binding methyltransferase superfamily. RNA methyltransferase RlmE family.

It is found in the cytoplasm. The catalysed reaction is uridine(2552) in 23S rRNA + S-adenosyl-L-methionine = 2'-O-methyluridine(2552) in 23S rRNA + S-adenosyl-L-homocysteine + H(+). In terms of biological role, specifically methylates the uridine in position 2552 of 23S rRNA at the 2'-O position of the ribose in the fully assembled 50S ribosomal subunit. The protein is Ribosomal RNA large subunit methyltransferase E of Ectopseudomonas mendocina (strain ymp) (Pseudomonas mendocina).